We begin with the raw amino-acid sequence, 391 residues long: GTPase Obg (391 aa).

Positions 1–159 (MQFVDEATID…RRLRLELKVL (159 aa)) constitute an Obg domain. The OBG-type G domain occupies 160–333 (ADVGLLGMPN…LVYALMNAIE (174 aa)). Residues 166–173 (GMPNAGKS), 191–195 (FTTLI), 213–216 (DIPG), 283–286 (NKID), and 314–316 (SAA) each bind GTP. 2 residues coordinate Mg(2+): Ser173 and Thr193. Residues 367–377 (LKAEARQARQN) show a composition bias toward basic and acidic residues. The segment at 367–391 (LKAEARQARQNDDDDDHDVEVVYEP) is disordered. Residues 378–391 (DDDDDHDVEVVYEP) are compositionally biased toward acidic residues.

This sequence belongs to the TRAFAC class OBG-HflX-like GTPase superfamily. OBG GTPase family. As to quaternary structure, monomer. Mg(2+) serves as cofactor.

The protein resides in the cytoplasm. In terms of biological role, an essential GTPase which binds GTP, GDP and possibly (p)ppGpp with moderate affinity, with high nucleotide exchange rates and a fairly low GTP hydrolysis rate. Plays a role in control of the cell cycle, stress response, ribosome biogenesis and in those bacteria that undergo differentiation, in morphogenesis control. In Alcanivorax borkumensis (strain ATCC 700651 / DSM 11573 / NCIMB 13689 / SK2), this protein is GTPase Obg.